A 184-amino-acid polypeptide reads, in one-letter code: Peptidyl-tRNA hydrolase (184 aa).

Position 17 (tyrosine 17) interacts with tRNA. Catalysis depends on histidine 22, which acts as the Proton acceptor. Positions 71, 73, and 119 each coordinate tRNA.

This sequence belongs to the PTH family. As to quaternary structure, monomer.

The protein localises to the cytoplasm. It carries out the reaction an N-acyl-L-alpha-aminoacyl-tRNA + H2O = an N-acyl-L-amino acid + a tRNA + H(+). Its function is as follows. Hydrolyzes ribosome-free peptidyl-tRNAs (with 1 or more amino acids incorporated), which drop off the ribosome during protein synthesis, or as a result of ribosome stalling. In terms of biological role, catalyzes the release of premature peptidyl moieties from peptidyl-tRNA molecules trapped in stalled 50S ribosomal subunits, and thus maintains levels of free tRNAs and 50S ribosomes. This Corynebacterium diphtheriae (strain ATCC 700971 / NCTC 13129 / Biotype gravis) protein is Peptidyl-tRNA hydrolase.